Here is a 229-residue protein sequence, read N- to C-terminus: Heptaprenylglyceryl phosphate synthase (229 aa).

Lys-12 provides a ligand contact to sn-glycerol 1-phosphate. Residues Asp-14 and Ser-40 each contribute to the Mg(2+) site. Sn-glycerol 1-phosphate-binding positions include 159–164 (YLEYSG), Gly-189, and 209–210 (GN).

Belongs to the GGGP/HepGP synthase family. Group I subfamily. Homodimer. Mg(2+) serves as cofactor.

The enzyme catalyses sn-glycerol 1-phosphate + all-trans-heptaprenyl diphosphate = 3-heptaprenyl-sn-glycero-1-phosphate + diphosphate. The protein operates within membrane lipid metabolism; glycerophospholipid metabolism. Its function is as follows. Prenyltransferase that catalyzes in vivo the transfer of the heptaprenyl moiety of heptaprenyl pyrophosphate (HepPP; 35 carbon atoms) to the C3 hydroxyl of sn-glycerol-1-phosphate (G1P), producing heptaprenylglyceryl phosphate (HepGP). This reaction is an ether-bond-formation step in the biosynthesis of archaea-type G1P-based membrane lipids found in Bacillales. This chain is Heptaprenylglyceryl phosphate synthase, found in Bacillus cereus (strain ZK / E33L).